The primary structure comprises 591 residues: Polyphenol oxidase D, chloroplastic (591 aa).

A chloroplast-targeting transit peptide spans 1–83 (MASLCSNSST…ANAIPLAASA (83 aa)). 2 cysteine pairs are disulfide-bonded: cysteine 94-cysteine 110 and cysteine 109-cysteine 177. The Cu cation site is built by histidine 176, histidine 194, histidine 203, histidine 324, histidine 328, and histidine 366. Residues 180–194 (CNGAYRIGGKELQVH) constitute a cross-link (2'-(S-cysteinyl)-histidine (Cys-His)).

This sequence belongs to the tyrosinase family. Cu(2+) serves as cofactor.

The protein localises to the plastid. The protein resides in the chloroplast thylakoid lumen. It catalyses the reaction 2 catechol + O2 = 2 1,2-benzoquinone + 2 H2O. Its function is as follows. Catalyzes the oxidation of mono- and o-diphenols to o-diquinones. This is Polyphenol oxidase D, chloroplastic from Solanum lycopersicum (Tomato).